The chain runs to 468 residues: Aspartate ammonia-lyase (468 aa).

L-aspartate contacts are provided by Thr-99, Ser-138, Thr-139, Asn-140, and Thr-185. The interval 315-324 is SS loop; sequence GSSIMPGKVN. The active-site Proton acceptor is the Ser-316. Residues Ser-317 and Lys-322 each contribute to the L-aspartate site.

Belongs to the class-II fumarase/aspartase family. Aspartase subfamily. In terms of assembly, homotetramer.

The catalysed reaction is L-aspartate = fumarate + NH4(+). Its function is as follows. Catalyzes the reversible conversion of L-aspartate to fumarate and ammonia. This Helicobacter pylori (strain J99 / ATCC 700824) (Campylobacter pylori J99) protein is Aspartate ammonia-lyase (aspA).